We begin with the raw amino-acid sequence, 280 residues long: Type 1 encapsulin shell protein (280 aa).

Belongs to the encapsulin family. Family 1 subfamily. In terms of assembly, this encapsulin nanocompartment is formed by 60 subunits; monomers form pentamers which assemble to form shells. There are 12 pores where the pentamers meet as well as 3-fold axis channels and dimer channels; none are larger than 3-4 Angstroms in diameter. The N-terminus of the protein is inside the shell, the C-terminus is outside.

It is found in the encapsulin nanocompartment. Its function is as follows. Shell component of a type 1 encapsulin nanocompartment. Assembles into proteinaceous icosahedral shells 24 nm in diameter in the presence and absence of its ferritin cargo protein. The center of cargo-loaded nanocompartments is loaded with iron. The empty encapsulin nanocompartment sequesters about 2200 Fe ions while the cargo-loaded nanocompartment can maximally sequester about 4150 Fe ions. Does not have any detectable ferroxidase activity. The sequence is that of Type 1 encapsulin shell protein from Rhodospirillum rubrum (strain ATCC 11170 / ATH 1.1.1 / DSM 467 / LMG 4362 / NCIMB 8255 / S1).